The sequence spans 545 residues: Chromosomal replication initiator protein DnaA (545 aa).

The tract at residues 1–72 (MNDFWQHCSA…DMARDFWQAP (72 aa)) is domain I, interacts with DnaA modulators. The segment at 72-208 (PVDVQFVLDP…GETDSMYERS (137 aa)) is domain II. A compositionally biased stretch (low complexity) spans 90 to 105 (AAAPAPASARPASAPG). Disordered regions lie at residues 90–112 (AAAPAPASARPASAPGSMGGSAG) and 181–204 (AAARRTWRPGQSASSNGNGETDSM). Residues 189-201 (PGQSASSNGNGET) are compositionally biased toward polar residues. A domain III, AAA+ region region spans residues 209–425 (KLNPVLTFDN…GALRKILAYS (217 aa)). 4 residues coordinate ATP: Gly253, Gly255, Lys256, and Thr257. Positions 426-545 (KFHGREITIE…LHVLEQTLKG (120 aa)) are domain IV, binds dsDNA.

This sequence belongs to the DnaA family. In terms of assembly, oligomerizes as a right-handed, spiral filament on DNA at oriC.

Its subcellular location is the cytoplasm. Plays an essential role in the initiation and regulation of chromosomal replication. ATP-DnaA binds to the origin of replication (oriC) to initiate formation of the DNA replication initiation complex once per cell cycle. Binds the DnaA box (a 9 base pair repeat at the origin) and separates the double-stranded (ds)DNA. Forms a right-handed helical filament on oriC DNA; dsDNA binds to the exterior of the filament while single-stranded (ss)DNA is stabiized in the filament's interior. The ATP-DnaA-oriC complex binds and stabilizes one strand of the AT-rich DNA unwinding element (DUE), permitting loading of DNA polymerase. After initiation quickly degrades to an ADP-DnaA complex that is not apt for DNA replication. Binds acidic phospholipids. This Paraburkholderia phytofirmans (strain DSM 17436 / LMG 22146 / PsJN) (Burkholderia phytofirmans) protein is Chromosomal replication initiator protein DnaA.